The following is a 1427-amino-acid chain: MDSLHVSSTSVLVDVVEAVETATSLVVDTAEAVATEQATPTAVISNALARSAYAAHTSLSYLAWAFGLWFLRLIGWVCYGIPTYVLGLLGRTINISLQFSSLLLILIALVTVVVAVVRYKYLTVYSRLPQEQPRQEPEIDMYDESDNEDEKTGFANYFDEFLSAVKIFGYLERPVFHELTRHMQTWKLSADEMVPLDDEQGFSVVVEGTVQVFAKQSSFVQNPTSVPDSRKEDSIMFNGERYTLLSEIKNGAPLTSLFNILSLFTDDLQLHKNFDSAVNSPMTSASDVPNMSLSSDGSDDLQKGEPQFGEPRLSEKPAAKLSVTVRAATDSTIAIIPAAAFRRITKKFPQATAHIVQVILTRFQRVTFQTGHHYFGLTPEIFQTEVNLNSHARNELPGYLREGAVKKLNQVYDASQMGGRPKKYTVTLNKKNKGKGSRRQRFSVQLNNQGHLNSQSRMVSLDSLEAVGDHMNPGDLLTNVPLSRQGRPVFELSSVKHKASIQNLSFSGNDDENEDTALRTALVEAIFKVLGIDRDSIQSSIMAVKTMSNTASPMFTGATTGGSSGSLGEELRSRRTGQDSLGASHFGVGLPSERSQNSFYARSETSTSSVDEDSLMAAPFDTIRNDVAQYMDVVLFKKDSLLIKQDDPTPGLYYLIDGVLEVGYTDHHKIYHDLYTVQPGGVGGYIGSILGHRSFADLRARTDVYAGFLPRAAIERMSDKYPMVHLTMAKSLTKVLSRLLLHLDFAMEWVQVRAGQKIYKEGQEADAIYIVLNGRVRSVAETKGDSGIVGGESGDAKDGKSHRKNLTSIGEYGKGESVGELEVLTLTRRPSTLVAIRDAELAKIPRALFESLALHYPSITFEISRIVASRVRTLMEDSAPIPRRMHTFDMAAHHDSYLTIAVVPISQDVDVSEFGRRLYNGMQAVGREACHLNHASVLNHMGRHAFNPLGKLKLSGFLDDIEDRYQTVLYVADTPPGSSWTHTCISQADCVLLVADARSEPDIGEYERVLVKMRTTARTEMVLIHPERYVPPGLTSAWLKPRVWVHTHHHVQMDLPRHEADVLASIRKMKRTGTLANLKNKVQTIQEEFRSMYRPKANIYSTSSANKDDFNRLARILSGQAIGLVLGGGGARGISHIGIIKALEDSGIPIDFVGGTSIGSFIGGLYAKEYDLVPIYGRAKKFSGRVSSLWRMALDLTYPATSYTTGHEFNRGIWKAFGDSRIEDFWLRYFTNTTNITHSRMEIHTSGYAWRYIRASMSLAGLLPPLTDNGSMLLDGGYVDNLPVSEMKAQGASVVFAVDVGSIDDTTPMNYGDSLSGAWVMWNRWNPFGRHPNVPNLAEIQARLAYVSSVGALEKAKHTPGVIYMRPPIDDFATLDFAKFLDIYRVGNKYGHKFLTELREDGKFPAIPGMENVKTKHKRTIARRNSI.

At 1 to 60 (MDSLHVSSTSVLVDVVEAVETATSLVVDTAEAVATEQATPTAVISNALARSAYAAHTSLS) the chain is on the cytoplasmic side. A helical membrane pass occupies residues 61-81 (YLAWAFGLWFLRLIGWVCYGI). The Lumenal portion of the chain corresponds to 82–96 (PTYVLGLLGRTINIS). The chain crosses the membrane as a helical span at residues 97–117 (LQFSSLLLILIALVTVVVAVV). Residues 118–1427 (RYKYLTVYSR…KRTIARRNSI (1310 aa)) lie on the Cytoplasmic side of the membrane. A compositionally biased stretch (polar residues) spans 281 to 296 (PMTSASDVPNMSLSSD). Residues 281-315 (PMTSASDVPNMSLSSDGSDDLQKGEPQFGEPRLSE) are disordered. A nucleoside 3',5'-cyclic phosphate-binding positions include 615 to 735 (LMAA…LTKV) and 731 to 870 (SLTK…VASR). Positions 787–807 (GIVGGESGDAKDGKSHRKNLT) are disordered. The PNPLA domain occupies 1124–1288 (LVLGGGGARG…VDNLPVSEMK (165 aa)). Positions 1128-1133 (GGGARG) match the GXGXXG motif. The GXSXG motif lies at 1155–1159 (GTSIG). The Nucleophile role is filled by Ser1157. Catalysis depends on Asp1275, which acts as the Proton acceptor. The DGA/G motif lies at 1275-1277 (DGG).

This sequence belongs to the NTE family.

It is found in the endoplasmic reticulum membrane. It carries out the reaction a 1-acyl-sn-glycero-3-phosphocholine + H2O = sn-glycerol 3-phosphocholine + a fatty acid + H(+). With respect to regulation, inhibited by organophosphorus esters. Intracellular phospholipase B that catalyzes the double deacylation of phosphatidylcholine (PC) to glycerophosphocholine (GroPCho). Plays an important role in membrane lipid homeostasis. Responsible for the rapid PC turnover in response to inositol, elevated temperatures, or when choline is present in the growth medium. The sequence is that of Lysophospholipase NTE1 (NTE1) from Yarrowia lipolytica (strain CLIB 122 / E 150) (Yeast).